We begin with the raw amino-acid sequence, 248 residues long: MAGHSKWANIKHRKERQDAKKGKIFTKWIRELTVAARQGGGDPGSNPRLRLALDKALGANMTRDTIDRAVARGVGASDGDDVEELGYEGYGPGGVAIMVETMTDNRNRTAAAVRHAFTKCGGNLGTDGSVAYLFDRKGQISFAAGVDEDSLIEAAMEADADDVVTNEDGSIDVFTSFSGFYAVRNALEAAGFKAADAEIVMLPTTSAVLDLETAEKVLKLIDMLEDLDDVQNVYSNAEIPDEVMEQLG.

Belongs to the TACO1 family.

The protein resides in the cytoplasm. The protein is Probable transcriptional regulatory protein Psyr_1407 of Pseudomonas syringae pv. syringae (strain B728a).